A 295-amino-acid chain; its full sequence is Large ribosomal subunit protein uL18 (295 aa).

The span at 251 to 261 (PTPKKKTDFAG) shows a compositional bias: basic and acidic residues. The interval 251 to 295 (PTPKKKTDFAGKTKRWNRKKMTFSQRRDRVKQKKASFLRAKQQEG) is disordered. Positions 262-271 (KTKRWNRKKM) are enriched in basic residues.

Belongs to the universal ribosomal protein uL18 family. Component of the large ribosomal subunit (LSU).

It localises to the cytoplasm. It is found in the nucleus. Component of the ribosome, a large ribonucleoprotein complex responsible for the synthesis of proteins in the cell. The small ribosomal subunit (SSU) binds messenger RNAs (mRNAs) and translates the encoded message by selecting cognate aminoacyl-transfer RNA (tRNA) molecules. The large subunit (LSU) contains the ribosomal catalytic site termed the peptidyl transferase center (PTC), which catalyzes the formation of peptide bonds, thereby polymerizing the amino acids delivered by tRNAs into a polypeptide chain. The nascent polypeptides leave the ribosome through a tunnel in the LSU and interact with protein factors that function in enzymatic processing, targeting, and the membrane insertion of nascent chains at the exit of the ribosomal tunnel. The protein is Large ribosomal subunit protein uL18 (RPL5) of Styela clava (Sea squirt).